A 1615-amino-acid polypeptide reads, in one-letter code: Ras-responsive element-binding protein 1 (1615 aa).

A disordered region spans residues 1–44 (MMSAVMNVGKIAENGGTSQTVKSPSKSPAPNRIGRRNQETKEEK). Polar residues predominate over residues 15 to 28 (GGTSQTVKSPSKSP). 3 consecutive C2H2-type zinc fingers follow at residues 47–69 (YTCPLCEKICTTQHQLTMHIRQH), 78–100 (HSCSICGKSLSSASSLDRHMLVH), and 106–128 (YKCSVCGQSFTTNGNMHRHMKIH). The interval 127–169 (IHEKDPNSTASTTPPSPLKAKRLSSKRKFSQDAEMDREERTPA) is disordered. Positions 145-154 (KAKRLSSKRK) are enriched in basic residues. 3 consecutive C2H2-type zinc fingers follow at residues 189-211 (YHCPVCFKDFFCKYALESHMETH), 216-239 (LRCDICCITFRTHRGLLRHNAVIH), and 297-319 (FICETCNKAFPMLLALKLHTETH). The interval 511 to 556 (SAQQASPGCISPSLPPPPLRLIKNSVETSSNSHLSQPGAKSSPSSQ) is disordered. The segment covering 535–549 (SVETSSNSHLSQPGA) has biased composition (polar residues). C2H2-type zinc fingers lie at residues 622–644 (YPCRFCDQVFAFSGVLRAHIRSH), 650–672 (YQCNICDYIAADKAALIRHLRTH), 732–754 (TVCKLCGEDLKHYRALRIHMRTH), and 763–788 (FECKECGTAFSAKRNCIHHILKQHLH). Disordered regions lie at residues 1025-1044 (AADASPKAASSSTGCDKSGN), 1058-1104 (DSNL…VDLE), and 1123-1162 (KFSPFLQSTDNFKEESGQNGTSEDEKETPEDKLLRGKRNT). Residues 1026 to 1036 (ADASPKAASSS) are compositionally biased toward low complexity. Residues 1082-1095 (TKKRGRKKGTKNKP) are compositionally biased toward basic residues. Positions 1123–1132 (KFSPFLQSTD) are enriched in polar residues. A C2H2-type 11 zinc finger spans residues 1170-1192 (ITCPYCPRVFSWASSLQRHMLTH). 2 disordered regions span residues 1214-1269 (CEKE…KSLD) and 1313-1418 (LSRH…DKRK). The segment covering 1242–1262 (PAEEDAEEKADEYEEGPEEDS) has biased composition (acidic residues). The C2H2-type 12 zinc-finger motif lies at 1298–1320 (HACDVCGKTFKFAGALSRHKKAH). Composition is skewed to basic and acidic residues over residues 1321–1339 (IREDRKDERSSEDESKSIQ) and 1388–1414 (GTERKSTEKSSDDKIPKTDEAKSTAKA). 2 C2H2-type zinc fingers span residues 1419-1441 (KVCTVCNKRFWSLQDLTRHMRSH) and 1447-1469 (YKCQTCERTFTLKHSLVRHQRIH). A compositionally biased stretch (basic residues) spans 1464-1477 (RHQRIHQKVKNTRN). The interval 1464 to 1585 (RHQRIHQKVK…SELERPSGFI (122 aa)) is disordered. Basic and acidic residues-rich tracts occupy residues 1478 to 1493 (HGKESDKEETQSRCGE) and 1566 to 1580 (PAKDQEPRGSSELER).

It belongs to the krueppel C2H2-type zinc-finger protein family. In terms of tissue distribution, broadly expressed, except in brain.

Its subcellular location is the nucleus. Its function is as follows. Transcription factor that binds specifically to the RAS-responsive elements (RRE) of gene promoters. This is Ras-responsive element-binding protein 1 (RREB1) from Gallus gallus (Chicken).